The sequence spans 25 residues: Large ribosomal subunit protein uL30 (25 aa).

The protein belongs to the universal ribosomal protein uL30 family. In terms of assembly, part of the 50S ribosomal subunit.

The protein is Large ribosomal subunit protein uL30 (rpmD) of Pseudomonas putida (Arthrobacter siderocapsulatus).